The chain runs to 160 residues: Cyclic pyranopterin monophosphate synthase (160 aa).

Substrate is bound by residues 74 to 76 (LSH) and 112 to 113 (ME). Residue Asp127 is part of the active site.

The protein belongs to the MoaC family. As to quaternary structure, homohexamer; trimer of dimers.

The enzyme catalyses (8S)-3',8-cyclo-7,8-dihydroguanosine 5'-triphosphate = cyclic pyranopterin phosphate + diphosphate. It participates in cofactor biosynthesis; molybdopterin biosynthesis. Its function is as follows. Catalyzes the conversion of (8S)-3',8-cyclo-7,8-dihydroguanosine 5'-triphosphate to cyclic pyranopterin monophosphate (cPMP). This is Cyclic pyranopterin monophosphate synthase from Geobacter sulfurreducens (strain ATCC 51573 / DSM 12127 / PCA).